Reading from the N-terminus, the 475-residue chain is tRNA-2-methylthio-N(6)-dimethylallyladenosine synthase (475 aa).

The MTTase N-terminal domain maps to 3 to 120; that stretch reads KKLHIKTWGC…LPEMIDQIRA (118 aa). 6 residues coordinate [4Fe-4S] cluster: cysteine 12, cysteine 49, cysteine 83, cysteine 157, cysteine 161, and cysteine 164. Positions 143–375 constitute a Radical SAM core domain; sequence RADGPSAFVS…QDRITQQAMR (233 aa). The TRAM domain occupies 378-441; sequence RQMVGTVQRI…TNSLRGVFIR (64 aa).

Belongs to the methylthiotransferase family. MiaB subfamily. Monomer. Requires [4Fe-4S] cluster as cofactor.

The protein localises to the cytoplasm. The enzyme catalyses N(6)-dimethylallyladenosine(37) in tRNA + (sulfur carrier)-SH + AH2 + 2 S-adenosyl-L-methionine = 2-methylsulfanyl-N(6)-dimethylallyladenosine(37) in tRNA + (sulfur carrier)-H + 5'-deoxyadenosine + L-methionine + A + S-adenosyl-L-homocysteine + 2 H(+). Its function is as follows. Catalyzes the methylthiolation of N6-(dimethylallyl)adenosine (i(6)A), leading to the formation of 2-methylthio-N6-(dimethylallyl)adenosine (ms(2)i(6)A) at position 37 in tRNAs that read codons beginning with uridine. This is tRNA-2-methylthio-N(6)-dimethylallyladenosine synthase from Shewanella halifaxensis (strain HAW-EB4).